Consider the following 456-residue polypeptide: F-box/FBD/LRR-repeat protein At1g13780 (456 aa).

Residues 9–55 form the F-box domain; the sequence is FDRISELPESLISQILLHLPTKASVKTSVLSTRWKNLWLNVPGLDLN. LRR repeat units follow at residues 197 to 220, 243 to 266, 302 to 325, and 355 to 379; these read LEEL…SLKR, APGL…NLTS, ISSV…SKVG, and FPNL…ELVN. Residues 372 to 424 form the FBD domain; sequence MEKFELVNVPRCFVSTLEHVEIKGLFDWGEQDMKIASYFLENSAVLKKLILSF.

This Arabidopsis thaliana (Mouse-ear cress) protein is F-box/FBD/LRR-repeat protein At1g13780.